Reading from the N-terminus, the 389-residue chain is Alanine racemase (389 aa).

Residue lysine 48 is the Proton acceptor; specific for D-alanine of the active site. Position 48 is an N6-(pyridoxal phosphate)lysine (lysine 48). Arginine 144 serves as a coordination point for substrate. Catalysis depends on tyrosine 281, which acts as the Proton acceptor; specific for L-alanine. Residue methionine 329 coordinates substrate.

It belongs to the alanine racemase family. Pyridoxal 5'-phosphate is required as a cofactor.

It catalyses the reaction L-alanine = D-alanine. Its pathway is amino-acid biosynthesis; D-alanine biosynthesis; D-alanine from L-alanine: step 1/1. Functionally, catalyzes the interconversion of L-alanine and D-alanine. May also act on other amino acids. This Leptospira interrogans serogroup Icterohaemorrhagiae serovar copenhageni (strain Fiocruz L1-130) protein is Alanine racemase (alr).